A 278-amino-acid chain; its full sequence is tRNA pseudouridine synthase A (278 aa).

Aspartate 51 serves as the catalytic Nucleophile. Tyrosine 109 contributes to the substrate binding site.

It belongs to the tRNA pseudouridine synthase TruA family. Homodimer.

The catalysed reaction is uridine(38/39/40) in tRNA = pseudouridine(38/39/40) in tRNA. Formation of pseudouridine at positions 38, 39 and 40 in the anticodon stem and loop of transfer RNAs. The polypeptide is tRNA pseudouridine synthase A (Paracidovorax citrulli (strain AAC00-1) (Acidovorax citrulli)).